Reading from the N-terminus, the 179-residue chain is Inorganic pyrophosphatase (179 aa).

3 residues coordinate substrate: K30, R44, and Y56. D66, D71, and D103 together coordinate Mg(2+). Residue Y142 coordinates substrate.

It belongs to the PPase family. In terms of assembly, homohexamer. Mg(2+) is required as a cofactor.

It localises to the cytoplasm. It catalyses the reaction diphosphate + H2O = 2 phosphate + H(+). In terms of biological role, catalyzes the hydrolysis of inorganic pyrophosphate (PPi) forming two phosphate ions. The sequence is that of Inorganic pyrophosphatase from Rhodospirillum rubrum (strain ATCC 11170 / ATH 1.1.1 / DSM 467 / LMG 4362 / NCIMB 8255 / S1).